Reading from the N-terminus, the 651-residue chain is Peptide-N(4)-(N-acetyl-beta-glucosaminyl)asparagine amidase (651 aa).

Ala2 is modified (N-acetylalanine). In terms of domain architecture, PUB spans 30 to 91 (EASKLLLTYA…EGETHLIFPK (62 aa)). Residues Cys247, Cys250, Cys280, and Cys283 each contribute to the Zn(2+) site. Residue Cys306 is the Nucleophile of the active site. Active-site residues include His333 and Asp350. The 201-residue stretch at 451-651 (ELGGRVSGSL…LEIIITFNDL (201 aa)) folds into the PAW domain.

The protein belongs to the transglutaminase-like superfamily. PNGase family. Component of a complex required to couple retrotranslocation, ubiquitination and deglycosylation composed of NGLY1, SAKS1, AMFR, VCP and RAD23B. Interacts with the proteasome components RAD23B and PSMC1. Interacts with directly with VCP. Interacts with DERL1, bringing it close to the endoplasmic reticulum membrane. Interacts with SAKS1. Requires Zn(2+) as cofactor. In terms of tissue distribution, ubiquitously expressed with highest level in testis.

The protein resides in the cytoplasm. It carries out the reaction Hydrolysis of an N(4)-(acetyl-beta-D-glucosaminyl)asparagine residue in which the glucosamine residue may be further glycosylated, to yield a (substituted) N-acetyl-beta-D-glucosaminylamine and a peptide containing an aspartate residue.. Inhibited by Z-VAD-fmk, a well-known caspase inhibitor, which inhibits enzyme activity through covalent binding of the carbohydrate to the single Cys-306 residue. Functionally, specifically deglycosylates the denatured form of N-linked glycoproteins in the cytoplasm and assists their proteasome-mediated degradation. Cleaves the beta-aspartyl-glucosamine (GlcNAc) of the glycan and the amide side chain of Asn, converting Asn to Asp. Prefers proteins containing high-mannose over those bearing complex type oligosaccharides. Can recognize misfolded proteins in the endoplasmic reticulum that are exported to the cytosol to be destroyed and deglycosylate them, while it has no activity toward native proteins. Deglycosylation is a prerequisite for subsequent proteasome-mediated degradation of some, but not all, misfolded glycoproteins. This chain is Peptide-N(4)-(N-acetyl-beta-glucosaminyl)asparagine amidase (Ngly1), found in Mus musculus (Mouse).